Consider the following 246-residue polypeptide: 4-aminobenzoate synthase (246 aa).

Fe(2+) contacts are provided by Glu-88, His-95, Glu-149, His-181, Asp-185, and His-188.

The protein belongs to the CADD family. As to quaternary structure, homodimer. The cofactor is Fe(2+). Requires Mn(2+) as cofactor.

In terms of biological role, involved in de novo para-aminobenzoate (PABA) biosynthesis. Acts as a self-sacrificing or 'suicide' enzyme that utilizes its own active site tyrosine residue(s) as the substrate for PABA synthesis. The side chain of the tyrosine residue is released from the protein backbone via cleavage of the C(alpha)-C(beta) bond, leaving a glycine in place of the original tyrosine residue. Reaction requires O(2) and a reduced dimetal cofactor. The chain is 4-aminobenzoate synthase from Nitrosomonas europaea (strain ATCC 19718 / CIP 103999 / KCTC 2705 / NBRC 14298).